A 347-amino-acid polypeptide reads, in one-letter code: Spermidine/putrescine import ATP-binding protein PotA (347 aa).

The region spanning 6–238 is the ABC transporter domain; the sequence is LEIRNLSHYY…PKTKFVADFI (233 aa). 40-47 serves as a coordination point for ATP; that stretch reads GPSGCGKT.

Belongs to the ABC transporter superfamily. Spermidine/putrescine importer (TC 3.A.1.11.1) family. In terms of assembly, the complex is composed of two ATP-binding proteins (PotA), two transmembrane proteins (PotB and PotC) and a solute-binding protein (PotD).

It is found in the cell inner membrane. The enzyme catalyses ATP + H2O + polyamine-[polyamine-binding protein]Side 1 = ADP + phosphate + polyamineSide 2 + [polyamine-binding protein]Side 1.. In terms of biological role, part of the ABC transporter complex PotABCD involved in spermidine/putrescine import. Responsible for energy coupling to the transport system. The protein is Spermidine/putrescine import ATP-binding protein PotA of Borrelia garinii subsp. bavariensis (strain ATCC BAA-2496 / DSM 23469 / PBi) (Borreliella bavariensis).